The primary structure comprises 293 residues: MKITEGYMPYLEYKTYYRIVGECTGNKKPLVLLHGGPGSTHNYFEVLDKVAEDGRAVIMYDQLGCGLSATPSRPDLWNAKTWIEELIQLRKHLGLDEIHLLGQSWGGMQAIQYACEYKPEGIKSYILSSTLPAASLWEKEQRRRVAYLPQEMQDAIAKAEKAGDYSSKEYQEAEAEFMLRHCAGAVGPDSPECLRRPKVAGTEAYVTAWGQNEFSPSGTLKNFDFMKEIEDIKEPCLITSGLLDLCSPLVAKTMYDKIPNSEWELFEFSRHMPFVEENEKYIEVLNKWLNKND.

An AB hydrolase-1 domain is found at K28–E277. S104 serves as the catalytic Nucleophile. D244 is a catalytic residue. H271 functions as the Proton donor in the catalytic mechanism.

This sequence belongs to the peptidase S33 family.

It catalyses the reaction Release of N-terminal proline from a peptide.. In terms of biological role, releases the N-terminal proline from various substrates. This is Proline iminopeptidase from Clostridium botulinum (strain Hall / ATCC 3502 / NCTC 13319 / Type A).